The chain runs to 398 residues: Aspartic protease 3 (398 aa).

The N-terminal stretch at 1–17 is a signal peptide; that stretch reads MSGRVFLLLALVALASA. Positions 18–55 are cleaved as a propeptide — removed in mature form; it reads IQRIKLEKRTYTREQYKFGSIQEHLKAKYVPGYIPNKD. In terms of domain architecture, Peptidase A1 spans 69 to 392; sequence YYGPVTIGTP…DHGNKRVGFA (324 aa). Residue Asp87 is part of the active site. Cysteines 100 and 107 form a disulfide. The active site involves Asp279. A disulfide bridge links Cys313 with Cys351. N-linked (GlcNAc...) asparagine glycosylation is present at Asn321.

The protein belongs to the peptidase A1 family. As to expression, highly expressed in intestine and to a lower extent in body wall muscles, hypodermis and neurons.

Its subcellular location is the cytoplasm. The protein resides in the lysosome. It localises to the secreted. Functionally, aspartic protease. Part of the necrosis cell death pathway. Involved in neuronal cell degeneration. Involved in heat stress response. The protein is Aspartic protease 3 of Caenorhabditis elegans.